The sequence spans 313 residues: Olfactory receptor 56A5 (313 aa).

Residues 1 to 33 are Extracellular-facing; sequence MTLPSNNSTSPVFEFFLICFPSFQSWQHWLSLP. N-linked (GlcNAc...) asparagine glycosylation is found at N6 and N7. Residues 34-54 traverse the membrane as a helical segment; sequence LSLLFLLAMGANATLLITIYL. Residues 55–67 lie on the Cytoplasmic side of the membrane; sequence EASLHQPLYYLLS. Residues 68–88 traverse the membrane as a helical segment; the sequence is LLSLLDIVLCLTVIPKVLAIF. The Extracellular segment spans residues 89–100; it reads WFDLRSISFPAC. A disulfide bridge links C100 with C182. Residues 101–121 form a helical membrane-spanning segment; that stretch reads FLQVFIMNSFLTMESCTFMIM. Residues 122 to 146 lie on the Cytoplasmic side of the membrane; the sequence is AYDRYVAICKPLQYSSIITDQFVAR. Residues 147–167 form a helical membrane-spanning segment; the sequence is AAIFVVARNGLLTMPIPILSS. At 168–203 the chain is on the extracellular side; sequence RLRYCAGHIIKNCICTNVSVSKLSCDDITLNQSYQF. 2 N-linked (GlcNAc...) asparagine glycosylation sites follow: N184 and N198. The helical transmembrane segment at 204-224 threads the bilayer; that stretch reads VIGWTLLGSDLILIVLSYFFI. Residues 225-246 lie on the Cytoplasmic side of the membrane; it reads LKTVLRIKGEGDMAKALGTCGS. A helical membrane pass occupies residues 247-267; the sequence is HFILILFFTTVLLVLVITNLA. Residues 268–276 are Extracellular-facing; it reads RKRIPPDVP. A helical transmembrane segment spans residues 277-297; the sequence is ILLNILHHLIPPALNPIVYGV. The Cytoplasmic portion of the chain corresponds to 298 to 313; that stretch reads RTKEIKQGIQNLLRRL.

Belongs to the G-protein coupled receptor 1 family.

The protein resides in the cell membrane. Its function is as follows. Odorant receptor. In Homo sapiens (Human), this protein is Olfactory receptor 56A5 (OR56A5).